Reading from the N-terminus, the 417-residue chain is NADH-quinone oxidoreductase subunit D (417 aa).

It belongs to the complex I 49 kDa subunit family. As to quaternary structure, NDH-1 is composed of 14 different subunits. Subunits NuoB, C, D, E, F, and G constitute the peripheral sector of the complex.

The protein localises to the cell inner membrane. The enzyme catalyses a quinone + NADH + 5 H(+)(in) = a quinol + NAD(+) + 4 H(+)(out). In terms of biological role, NDH-1 shuttles electrons from NADH, via FMN and iron-sulfur (Fe-S) centers, to quinones in the respiratory chain. The immediate electron acceptor for the enzyme in this species is believed to be ubiquinone. Couples the redox reaction to proton translocation (for every two electrons transferred, four hydrogen ions are translocated across the cytoplasmic membrane), and thus conserves the redox energy in a proton gradient. This Acidovorax sp. (strain JS42) protein is NADH-quinone oxidoreductase subunit D.